Consider the following 747-residue polypeptide: Heterogeneous nuclear ribonucleoprotein U-like protein 2 (747 aa).

The region spanning 3-37 is the SAP domain; sequence VKRLKVTELRSELQRRGLDSRGLKVDLAQRLQEAL. 2 disordered regions span residues 40–242 and 627–666; these read EMLE…EEED and EEARKLLPPSEKRTNRRNNRNKRNRQNRSRGQGYVGGQRR. The segment covering 73–97 has biased composition (acidic residues); the sequence is GDEEEDEEEEEEDEEALLEDEDEEP. The segment covering 115–125 has biased composition (low complexity); the sequence is EAAAMEAAAEP. Residues 137-147 show a composition bias toward gly residues; the sequence is GSGGVNGGEEQ. The segment covering 148 to 163 has biased composition (basic and acidic residues); the sequence is GLGKREEDEPEERSGD. Residue serine 161 is modified to Phosphoserine. Position 165 is a phosphothreonine (threonine 165). Residues serine 168, serine 185, serine 188, serine 226, and serine 228 each carry the phosphoserine modification. The segment covering 185–223 has biased composition (basic and acidic residues); sequence SEKSKPAGSDGERRGVKRQRDEKDEHGRAYYEFREEAYH. In terms of domain architecture, B30.2/SPRY spans 226 to 419; that stretch reads SKSPLPPEEE…VELNFGQKEE (194 aa). Acidic residues predominate over residues 232–242; it reads PEEEAKDEEED. The segment covering 627-639 has biased composition (basic and acidic residues); sequence EEARKLLPPSEKR. Positions 640-654 are enriched in basic residues; it reads TNRRNNRNKRNRQNR. 4 positions are modified to omega-N-methylarginine: arginine 656, arginine 684, arginine 738, and arginine 747.

In terms of assembly, binds to MLF1 and retains it in the nucleus.

The protein resides in the nucleus. This Homo sapiens (Human) protein is Heterogeneous nuclear ribonucleoprotein U-like protein 2 (HNRNPUL2).